An 819-amino-acid polypeptide reads, in one-letter code: Endonuclease MutS2 (819 aa).

Residue Gly-339–Thr-346 coordinates ATP. The Smr domain maps to Val-744–Ala-819.

This sequence belongs to the DNA mismatch repair MutS family. MutS2 subfamily. In terms of assembly, homodimer. Binds to stalled ribosomes, contacting rRNA.

Its function is as follows. Endonuclease that is involved in the suppression of homologous recombination and thus may have a key role in the control of bacterial genetic diversity. In terms of biological role, acts as a ribosome collision sensor, splitting the ribosome into its 2 subunits. Detects stalled/collided 70S ribosomes which it binds and splits by an ATP-hydrolysis driven conformational change. Acts upstream of the ribosome quality control system (RQC), a ribosome-associated complex that mediates the extraction of incompletely synthesized nascent chains from stalled ribosomes and their subsequent degradation. Probably generates substrates for RQC. The polypeptide is Endonuclease MutS2 (Gemmatimonas aurantiaca (strain DSM 14586 / JCM 11422 / NBRC 100505 / T-27)).